We begin with the raw amino-acid sequence, 224 residues long: Ras-related protein Rab-11C (224 aa).

Position 17-24 (17-24 (GDSAVGKS)) interacts with GTP. The short motif at 39–47 (TKATIGVDF) is the Effector region element. Residues 65-69 (DTAGQ) and 123-126 (NKSD) each bind GTP. The disordered stretch occupies residues 194–224 (QGKKLTPLSDPAPQLTANTTSTHQEKKSGCC). S-geranylgeranyl cysteine attachment occurs at residues cysteine 223 and cysteine 224.

It belongs to the small GTPase superfamily. Rab family.

Its subcellular location is the membrane. In Dictyostelium discoideum (Social amoeba), this protein is Ras-related protein Rab-11C (rab11C).